Consider the following 221-residue polypeptide: Ras-related protein RABA5a (221 aa).

21–28 is a binding site for GTP; the sequence is GDSAVGKS. The Effector region signature appears at 43–51; the sequence is SKSTIGVEF. GTP is bound by residues 69–73, 127–130, and 157–158; these read DTAGQ, NKSD, and SA. Residues C218 and C219 are each lipidated (S-geranylgeranyl cysteine).

It belongs to the small GTPase superfamily. Rab family.

It is found in the cell membrane. Intracellular vesicle trafficking and protein transport. The chain is Ras-related protein RABA5a (RABA5A) from Arabidopsis thaliana (Mouse-ear cress).